The sequence spans 152 residues: UPF0266 membrane protein KPK_1957 (152 aa).

A run of 3 helical transmembrane segments spans residues 6–26, 45–65, and 67–87; these read LVII…QFIM, VDGL…ITQH, and TPIT…LFWI.

The protein belongs to the UPF0266 family.

The protein resides in the cell inner membrane. The chain is UPF0266 membrane protein KPK_1957 from Klebsiella pneumoniae (strain 342).